Reading from the N-terminus, the 239-residue chain is Ribosomal RNA small subunit methyltransferase G (239 aa).

S-adenosyl-L-methionine contacts are provided by residues glycine 105, leucine 110, 156–157 (VE), and arginine 169.

The protein belongs to the methyltransferase superfamily. RNA methyltransferase RsmG family.

Its subcellular location is the cytoplasm. The enzyme catalyses guanosine(527) in 16S rRNA + S-adenosyl-L-methionine = N(7)-methylguanosine(527) in 16S rRNA + S-adenosyl-L-homocysteine. Specifically methylates the N7 position of guanine in position 527 of 16S rRNA. The polypeptide is Ribosomal RNA small subunit methyltransferase G (Verminephrobacter eiseniae (strain EF01-2)).